The primary structure comprises 37 residues: AKVKETTGIVGLXVVPNAREVLINLYRKTLEEIKAVP.

The protein belongs to the complex I NDUFA5 subunit family. As to quaternary structure, complex I is composed of about 45 different subunits.

It localises to the mitochondrion inner membrane. Its function is as follows. Accessory subunit of the mitochondrial membrane respiratory chain NADH dehydrogenase (Complex I), that is believed not to be involved in catalysis. Complex I functions in the transfer of electrons from NADH to the respiratory chain. The immediate electron acceptor for the enzyme is believed to be ubiquinone. In Solanum tuberosum (Potato), this protein is NADH dehydrogenase [ubiquinone] 1 alpha subcomplex subunit 5.